Here is a 138-residue protein sequence, read N- to C-terminus: Large ribosomal subunit protein uL16 (138 aa).

The segment covering 1–16 (MLIPRRVKHRKQHHPS) has biased composition (basic residues). The segment at 1–25 (MLIPRRVKHRKQHHPSRSGAAKGGT) is disordered.

Belongs to the universal ribosomal protein uL16 family. As to quaternary structure, part of the 50S ribosomal subunit.

In terms of biological role, binds 23S rRNA and is also seen to make contacts with the A and possibly P site tRNAs. The polypeptide is Large ribosomal subunit protein uL16 (Rhodococcus erythropolis (strain PR4 / NBRC 100887)).